We begin with the raw amino-acid sequence, 170 residues long: Shikimate kinase (170 aa).

11-16 (LSGKST) lines the ATP pocket. Ser-15 contributes to the Mg(2+) binding site. Substrate is bound by residues Asp-33, Arg-57, and Gly-79. Arg-119 serves as a coordination point for ATP. Arg-137 provides a ligand contact to substrate.

This sequence belongs to the shikimate kinase family. As to quaternary structure, monomer. It depends on Mg(2+) as a cofactor.

The protein localises to the cytoplasm. It carries out the reaction shikimate + ATP = 3-phosphoshikimate + ADP + H(+). The protein operates within metabolic intermediate biosynthesis; chorismate biosynthesis; chorismate from D-erythrose 4-phosphate and phosphoenolpyruvate: step 5/7. Catalyzes the specific phosphorylation of the 3-hydroxyl group of shikimic acid using ATP as a cosubstrate. This is Shikimate kinase from Clostridium botulinum (strain Okra / Type B1).